Consider the following 489-residue polypeptide: Glycogen synthase (489 aa).

Arg20 contacts ADP-alpha-D-glucose.

This sequence belongs to the glycosyltransferase 1 family. Bacterial/plant glycogen synthase subfamily.

It carries out the reaction [(1-&gt;4)-alpha-D-glucosyl](n) + ADP-alpha-D-glucose = [(1-&gt;4)-alpha-D-glucosyl](n+1) + ADP + H(+). Its pathway is glycan biosynthesis; glycogen biosynthesis. Synthesizes alpha-1,4-glucan chains using ADP-glucose. In Chlorobium phaeobacteroides (strain DSM 266 / SMG 266 / 2430), this protein is Glycogen synthase.